Consider the following 496-residue polypeptide: Iroquois-class homeodomain protein irx-4 (496 aa).

The segment at residues 141–203 is a DNA-binding region (homeobox; TALE-type); it reads GSTRRKNATR…NARRRLKKEN (63 aa). Positions 203–236 are disordered; it reads NKMTWPPRNKCSDEKRPYDEEEEEEEEEDSQKAT. Residues 221-231 show a composition bias toward acidic residues; sequence DEEEEEEEEED.

It belongs to the TALE/IRO homeobox family. As to expression, expressed in the neural plate in overlapping patterns with other irx members, which all share an anterior border of expression. Broadly expressed in the tailbud rhombencephalon (hindbrain). Outside the nervous system and at tailbud stages, expressed in the developing otic vesicle, branchial arches and prospective heart region.

It localises to the nucleus. Its function is as follows. Acts partially redundantly with other irx members in neural patterning. Required for formation of the posterior forebrain, midbrain, hindbrain, and to a lesser extent, spinal cord. Patterns the neuroectoderm in both the anterior/posterior and dorsal/ventral axes. Does not appear to play a role in pronephros kidney development. This chain is Iroquois-class homeodomain protein irx-4, found in Xenopus tropicalis (Western clawed frog).